A 767-amino-acid polypeptide reads, in one-letter code: Two-component response regulator-like PRR73 (767 aa).

The segment at 1–64 (MGSACEAGTD…EPQQTDEQKE (64 aa)) is disordered. Positions 82–200 (RVLLVENDDS…ELKNLWQHVW (119 aa)) constitute a Response regulatory domain. Positions 205–214 (SSSGSGSESG) are enriched in low complexity. 5 disordered regions span residues 205-272 (SSSG…QSSW), 312-388 (RWLP…NEPT), 476-546 (ASNQ…RGKV), 646-701 (ANYS…SGSG), and 727-767 (NFGK…DEDR). Residues 238–252 (DNEDDDDNDEDDDDL) show a composition bias toward acidic residues. Polar residues-rich tracts occupy residues 263–272 (DNGSGTQSSW), 343–361 (RNSS…VNPT), and 488–497 (CSPQDNSSEA). Low complexity predominate over residues 518 to 531 (GSNGSSNNNDMGSS). The segment covering 532–543 (TKNAITKPSSNR) has biased composition (polar residues). Residues 689 to 700 (GAGGGNGSGSGS) show a composition bias toward gly residues. Residues 712-754 (REAALNKFRQKRKVRNFGKKVRYQSRKRLAEQRPRIRGQFVRQ) form the CCT domain. A compositionally biased stretch (basic residues) spans 727-738 (NFGKKVRYQSRK).

Belongs to the ARR-like family.

The protein resides in the nucleus. In terms of biological role, controls photoperiodic flowering response. Seems to be one of the component of the circadian clock. Expression of several members of the ARR-like family is controlled by circadian rhythm. The particular coordinated sequential expression of PRR73, PRR37, PRR95, PRR59 and PPR1 result to circadian waves that may be at the basis of the endogenous circadian clock. The chain is Two-component response regulator-like PRR73 (PRR73) from Oryza sativa subsp. indica (Rice).